Here is a 197-residue protein sequence, read N- to C-terminus: FMN-dependent NADH:quinone oxidoreductase (197 aa).

An FMN-binding site is contributed by Ser-10.

It belongs to the azoreductase type 1 family. Homodimer. FMN is required as a cofactor.

It carries out the reaction 2 a quinone + NADH + H(+) = 2 a 1,4-benzosemiquinone + NAD(+). The catalysed reaction is N,N-dimethyl-1,4-phenylenediamine + anthranilate + 2 NAD(+) = 2-(4-dimethylaminophenyl)diazenylbenzoate + 2 NADH + 2 H(+). Functionally, quinone reductase that provides resistance to thiol-specific stress caused by electrophilic quinones. Its function is as follows. Also exhibits azoreductase activity. Catalyzes the reductive cleavage of the azo bond in aromatic azo compounds to the corresponding amines. The polypeptide is FMN-dependent NADH:quinone oxidoreductase (Mycoplasma pneumoniae (strain ATCC 29342 / M129 / Subtype 1) (Mycoplasmoides pneumoniae)).